The following is a 391-amino-acid chain: Serine acetyltransferase 3, mitochondrial (391 aa).

2 disordered regions span residues 40-82 and 353-375; these read KHHT…HDDE and VGNP…IPGL. Residues 45 to 56 are compositionally biased toward pro residues; sequence SPPPSPPPPPPM.

The protein belongs to the transferase hexapeptide repeat family. As to quaternary structure, homomultimer. Interacts with OASC. Component of the cysteine synthase complex (CSC) composed of two OAS-TL dimers and one SAT hexamer. In terms of tissue distribution, ubiquitous with higher levels in leaves and siliques. Localized in vascular tissues, particularly in phloem.

Its subcellular location is the mitochondrion. The enzyme catalyses L-serine + acetyl-CoA = O-acetyl-L-serine + CoA. It participates in amino-acid biosynthesis; L-cysteine biosynthesis; L-cysteine from L-serine: step 1/2. In Arabidopsis thaliana (Mouse-ear cress), this protein is Serine acetyltransferase 3, mitochondrial (SAT3).